The primary structure comprises 384 residues: Spermidine/putrescine import ATP-binding protein PotA (384 aa).

The ABC transporter domain occupies 6–238; the sequence is IAFQNVSKVF…PINHFVATFI (233 aa). 40 to 47 provides a ligand contact to ATP; sequence GASGSGKS.

It belongs to the ABC transporter superfamily. Spermidine/putrescine importer (TC 3.A.1.11.1) family. As to quaternary structure, the complex is composed of two ATP-binding proteins (PotA), two transmembrane proteins (PotB and PotC) and a solute-binding protein (PotD).

Its subcellular location is the cell membrane. The catalysed reaction is ATP + H2O + polyamine-[polyamine-binding protein]Side 1 = ADP + phosphate + polyamineSide 2 + [polyamine-binding protein]Side 1.. In terms of biological role, part of the ABC transporter complex PotABCD involved in spermidine/putrescine import. Responsible for energy coupling to the transport system. The protein is Spermidine/putrescine import ATP-binding protein PotA of Streptococcus thermophilus (strain ATCC BAA-250 / LMG 18311).